The primary structure comprises 306 residues: MKEDRVVFIFGPTAVGKSNILFHFPKNKAEIINVDSIQVYKEFNIASSKPSKNLMKHIKHHLVDFLDPEKDYTIGIFYEQALKIVKEIRQKKKIPIFVGGTAFYFKHLKDGFPSTPLVTSKIRIYVNNLLELKGKSYLLKELKNVDPIRFNMLNKNDIYRIKRSLEVYYQTGIPISQFQKKQSSEFKNIVIIGLKRSFEDLKTRISIRINEMLNSGLLSEIKGLFSKGYNENTPAFKGIGYNEFLLWKSRPCYGLNDIIGLINKNSFLYAKRQMTFFAKISDVLWLHPEDDLDNILNLIFKVDKEI.

11–18 (GPTAVGKS) contributes to the ATP binding site. 13–18 (TAVGKS) serves as a coordination point for substrate. The segment at 35–38 (DSIQ) is interaction with substrate tRNA.

This sequence belongs to the IPP transferase family. Monomer. Mg(2+) is required as a cofactor.

It catalyses the reaction adenosine(37) in tRNA + dimethylallyl diphosphate = N(6)-dimethylallyladenosine(37) in tRNA + diphosphate. In terms of biological role, catalyzes the transfer of a dimethylallyl group onto the adenine at position 37 in tRNAs that read codons beginning with uridine, leading to the formation of N6-(dimethylallyl)adenosine (i(6)A). This Borreliella burgdorferi (strain ATCC 35210 / DSM 4680 / CIP 102532 / B31) (Borrelia burgdorferi) protein is tRNA dimethylallyltransferase.